The primary structure comprises 1311 residues: MADRRVGKRQMGQRGFSKVESGTCNVCSAPCSSCMHRNVGFTGSKLDESSDENCHGVVGSQCSVNEDDLLPSSMVNAHKSLNNTASEASNLVNSSHDALSENAESKETIRCSGISDDSGAAAMTSKPSLSGSRMKHKVSASANMLDQSSNCIEDQEDGILSADRAKQLKSGCSNNEIGNKDLADGSALNSDPIPGGSRKDEVKLESLQNPSSNHDDRVSSEKGNFKEKSRPGGNKERQEPSVEGSTRSGENRKDGKSSKSSSSNSSAVSESESDDSEMVEHDVKVCDICGDAGREDLLAICSGCSDGAEHTYCMREMLDEVPEGDWLCEECAEEAEKQKQEAKRKRETEVTFNTYSSGKRHADKIEAAPDAKRQVVEASTGSPKKSILPRVGALSRETSFKGLDRLRGKLNHQTSFSDDTESARSAGSQLQPPKGAFLKSSSFNCSSSKPKVQLMDDAIHPRQKTGKEDTALDLKVGGFRNVGKSMPSRTTDAGNSGGSDSQAKMLGSKVYHSQEGKSLKQVKDRNREANASASSIDQKLKSRGNSSVSHANNNRDLKGLQSDGKRGNLTKQVSNLSRNRLENSVVSGGDISTNEKCSASEQSSSQADCKDELPSTSCTGEGMPNHGTVALQDGLPRSRVPREVGKKSKEAFSKRQRSSLLAGAKGLPSSQKGGQTAESSDTSGVSDSDLSTTKNVKEDLNKGNRLRAAVDAALRKKPSFGKNRVLEQSDASLVANVDSSSEKTLRNQLPSKMHKNHVSHEGLQGGHPILWPTSDPYKQTIVTNEKQLIFPGADTIPSRLVEPEVSFPAVKPVMRDLPLVPSPVMLRSSAIPDHEFIWQGDLEVRKIINQSAMHSGIQAHLSTLASPRVAEVVNKFPETFSLNEVPRKSTWPTQFEKLGTKEAHIALFFFAKDTESYERNYKPLVDNMIKNDLALKGNLDNVDLLIFASNQLPSNCQRWNMLYFLWGVFQGRKETNPQKNTSLPTSNVLPRDRDPKELCQTSSPSKHLEKGSSLRESSSNGIETRNGTDARSHENPNNRESSIERSPSKKEDIALKVEEAGVNHIPPQVTGSNSGDSLVRKVQKVEEQELGGRKDLPLTVMGSGIQSHGQDNPLEKDLNSSQASHRKRPLWELSNPANENSSAINQKVELNNDGLCEGSPNKKLKTENGSSSLCRDTSGHDSGIMKKSPKVVFPLDLNDDSEMVDNLSPLGNDENNNNRRLISGTVPNLELALGAEETTEATMGLLPFLSRSSNSGEQSNNSMNKEKQKADEEEEDDAEVAASLSLSLSFPGTEERKNVNTPLFLFRDLPR.

Disordered stretches follow at residues M1 to S21, I114 to S141, and G178 to E280. A compositionally biased stretch (basic and acidic residues) spans N213 to P240. Residues S258–E270 show a composition bias toward low complexity. Residues V283–E334 form a PHD-type zinc finger. Positions 286, 289, 301, 304, 310, 313, 328, and 331 each coordinate Zn(2+). Positions C328–T348 form a coiled coil. Disordered regions lie at residues P369 to R390, N411 to S440, H460 to N701, T975 to K1050, E1059 to L1078, E1087 to N1138, N1152 to K1186, and L1249 to R1311. A compositionally biased stretch (polar residues) spans N411–Q431. Basic and acidic residues predominate over residues H460–L472. Residues P487 to Q502 are compositionally biased toward polar residues. The span at H512–E528 shows a compositional bias: basic and acidic residues. Positions A529–N552 are enriched in polar residues. Over residues N553–R566 the composition is skewed to basic and acidic residues. The segment covering L569–A607 has biased composition (polar residues). A compositionally biased stretch (basic and acidic residues) spans V640–S653. Composition is skewed to polar residues over residues P668 to K694, P977 to V988, and L1014 to R1025. Over residues N1026–K1050 the composition is skewed to basic and acidic residues. A compositionally biased stretch (basic and acidic residues) spans E1087–L1096. Positions S1250 to M1263 are enriched in polar residues. Residues G1256–D1276 are a coiled coil. The span at V1280–S1289 shows a compositional bias: low complexity.

As to quaternary structure, part of the BAH-PHD bivalent histone reader complex that contains AIPP2, PAIPP2 and AIPP3/BDT1; the BAH-PHD module associates with CPL2 to form the BAH-PHD-CPL2 complex (BPC) for transcriptional repression. Binds directly to AIPP3/BDT1 and CPL2, but not to AIPP2. As to expression, expressed ubiquitously.

Its function is as follows. Together with AIPP2 and AIPP3/BDT1, cooperates to form a BAH-PHD bivalent histone reader complex able to read histone H3 lysine 27 trimethylation (H3K27me3) and low-methylated H3K4 histone marks in order to regulate transcription, especially to prevent early flowering; promotes AIPP3/BDT1 binding to H3K27me3. CPL2 is subsequently recruited to form a BAH-PHD-CPL2 complex (BPC) in order to silence several H3K27me3 and low-methylated H3K4 enriched loci, including AGO5, via the phosphorylation state-dependent inhibition of Pol II release from the transcriptional start site (e.g. Ser5P-Pol II dephosphorylation). The BPC complex represses flowering by inhibiting the expression of several genes, including AGL6, FT, FUL and SOC1. This chain is Protein PARALOG OF AIPP2, found in Arabidopsis thaliana (Mouse-ear cress).